We begin with the raw amino-acid sequence, 239 residues long: 2',3'-cyclic-nucleotide 3'-phosphodiesterase (239 aa).

Active-site proton donor/acceptor residues include His39 and His150.

This sequence belongs to the 2H phosphoesterase superfamily. CPD1 family.

Its subcellular location is the golgi apparatus. It catalyses the reaction ADP-alpha-D-ribose 1'',2''-cyclic phosphate + H2O = ADP-alpha-D-ribose 1''-phosphate + H(+). It carries out the reaction 2',3'-cyclophospho-AMP + H2O = adenosine 2'-phosphate + H(+). The enzyme catalyses 2',3'-cyclophospho-GMP + H2O = guanosine 2'-phosphate + H(+). The catalysed reaction is 2',3'-cyclophospho-UMP + H2O = uridine 2'-phosphate + H(+). It catalyses the reaction 2',3'-cyclophospho-CMP + H2O = cytidine 2'-phosphate + H(+). It carries out the reaction a nucleoside 2',3'-cyclic phosphate + H2O = a nucleoside 2'-phosphate + H(+). In terms of biological role, involved in the metabolism of ADP-ribose 1',2'-cyclic phosphate which is produced as a consequence of tRNA splicing. The chain is 2',3'-cyclic-nucleotide 3'-phosphodiesterase from Saccharomyces cerevisiae (strain ATCC 204508 / S288c) (Baker's yeast).